A 314-amino-acid polypeptide reads, in one-letter code: L-lactate dehydrogenase (314 aa).

NAD(+) contacts are provided by residues Val-17, Asp-38, Lys-43, Tyr-69, and 83–84 (GA). Positions 86 and 92 each coordinate substrate. NAD(+) contacts are provided by residues Ser-105, 122–124 (ASN), and Ser-147. 124–127 (NPVD) contacts substrate. 152 to 155 (DSAR) contacts substrate. Beta-D-fructose 1,6-bisphosphate is bound by residues Arg-157 and His-172. Catalysis depends on His-179, which acts as the Proton acceptor. A Phosphotyrosine modification is found at Tyr-223. Substrate is bound at residue Thr-232.

It belongs to the LDH/MDH superfamily. LDH family. Homotetramer.

It is found in the cytoplasm. It carries out the reaction (S)-lactate + NAD(+) = pyruvate + NADH + H(+). It participates in fermentation; pyruvate fermentation to lactate; (S)-lactate from pyruvate: step 1/1. With respect to regulation, allosterically activated by fructose 1,6-bisphosphate (FBP). Its function is as follows. Catalyzes the conversion of lactate to pyruvate. The sequence is that of L-lactate dehydrogenase from Corynebacterium glutamicum (strain R).